Here is a 560-residue protein sequence, read N- to C-terminus: Putative transport protein VV1438 (560 aa).

The next 5 helical transmembrane spans lie at 5–25, 37–57, 66–86, 91–111, and 164–184; these read VVLL…AIGL, LGNS…GFSF, FMLF…GIFF, HYFT…YFAS, and VGYA…AKLL. RCK C-terminal domains lie at 203–292 and 293–376; these read RGLG…FRNG and KEVF…RIGF. Helical transmembrane passes span 386–406, 409–429, 443–463, 478–498, 506–526, and 539–559; these read LLAF…TMTF, VSFS…LGFL, ALNM…GLSA, IIGI…LVGA, ALLF…DIVN, and AGTY…LIIL.

The protein belongs to the AAE transporter (TC 2.A.81) family. YbjL subfamily.

Its subcellular location is the cell membrane. In Vibrio vulnificus (strain YJ016), this protein is Putative transport protein VV1438.